We begin with the raw amino-acid sequence, 180 residues long: ATP synthase subunit delta (180 aa).

The protein belongs to the ATPase delta chain family. As to quaternary structure, F-type ATPases have 2 components, F(1) - the catalytic core - and F(0) - the membrane proton channel. F(1) has five subunits: alpha(3), beta(3), gamma(1), delta(1), epsilon(1). F(0) has three main subunits: a(1), b(2) and c(10-14). The alpha and beta chains form an alternating ring which encloses part of the gamma chain. F(1) is attached to F(0) by a central stalk formed by the gamma and epsilon chains, while a peripheral stalk is formed by the delta and b chains.

The protein resides in the cell membrane. Its function is as follows. F(1)F(0) ATP synthase produces ATP from ADP in the presence of a proton or sodium gradient. F-type ATPases consist of two structural domains, F(1) containing the extramembraneous catalytic core and F(0) containing the membrane proton channel, linked together by a central stalk and a peripheral stalk. During catalysis, ATP synthesis in the catalytic domain of F(1) is coupled via a rotary mechanism of the central stalk subunits to proton translocation. This protein is part of the stalk that links CF(0) to CF(1). It either transmits conformational changes from CF(0) to CF(1) or is implicated in proton conduction. The sequence is that of ATP synthase subunit delta from Pediococcus pentosaceus (strain ATCC 25745 / CCUG 21536 / LMG 10740 / 183-1w).